Here is a 264-residue protein sequence, read N- to C-terminus: Phosphoribosylaminoimidazole-succinocarboxamide synthase (264 aa).

This sequence belongs to the SAICAR synthetase family.

The catalysed reaction is 5-amino-1-(5-phospho-D-ribosyl)imidazole-4-carboxylate + L-aspartate + ATP = (2S)-2-[5-amino-1-(5-phospho-beta-D-ribosyl)imidazole-4-carboxamido]succinate + ADP + phosphate + 2 H(+). It functions in the pathway purine metabolism; IMP biosynthesis via de novo pathway; 5-amino-1-(5-phospho-D-ribosyl)imidazole-4-carboxamide from 5-amino-1-(5-phospho-D-ribosyl)imidazole-4-carboxylate: step 1/2. The sequence is that of Phosphoribosylaminoimidazole-succinocarboxamide synthase (purC) from Synechocystis sp. (strain ATCC 27184 / PCC 6803 / Kazusa).